Consider the following 238-residue polypeptide: MKVSIEEMVQVGMHFGHQSRKWNPKMAPFIYTERNGIHIIDLIQTHAYLKQVSQFLTESSAAGKTILFVGTKKQASGLIAKVALQCNSPYVNQRWLGGMLTNWKTIQTSIKKLNEFDYQEKTGGFDLLSKQEAAQARKEKARLQKYLGGMKHMTTIPDVVVIVGQPDELNAVAECRRLGIRSVTILDTDCDPSLADLFVPANDDSVASIQLILTEFLRSILNGQQMFSEKQQRGKKTA.

The protein belongs to the universal ribosomal protein uS2 family.

The protein resides in the plastid. Its subcellular location is the chloroplast. This chain is Small ribosomal subunit protein uS2c (rps2), found in Oltmannsiellopsis viridis (Marine flagellate).